The primary structure comprises 452 residues: Xaa-Pro dipeptidase 1 (452 aa).

Mn(2+) is bound by residues Asp-247, Asp-258, His-338, Glu-383, and Glu-422.

The protein belongs to the peptidase M24B family. Bacterial-type prolidase subfamily. The cofactor is Mn(2+).

The catalysed reaction is Xaa-L-Pro dipeptide + H2O = an L-alpha-amino acid + L-proline. Functionally, splits dipeptides with a prolyl residue in the C-terminal position. In Idiomarina loihiensis (strain ATCC BAA-735 / DSM 15497 / L2-TR), this protein is Xaa-Pro dipeptidase 1.